The following is a 66-amino-acid chain: MIIPIRCFTCGSLIGDKWEPFITRVSNGEDPGKVLDDLGVKRYCCRRMLLSHVDIIKEVIHYTRPI.

4 residues coordinate Zn(2+): cysteine 7, cysteine 10, cysteine 44, and cysteine 45.

This sequence belongs to the archaeal Rpo10/eukaryotic RPB10 RNA polymerase subunit family. In terms of assembly, part of the RNA polymerase complex. Requires Zn(2+) as cofactor.

It localises to the cytoplasm. It catalyses the reaction RNA(n) + a ribonucleoside 5'-triphosphate = RNA(n+1) + diphosphate. Functionally, DNA-dependent RNA polymerase (RNAP) catalyzes the transcription of DNA into RNA using the four ribonucleoside triphosphates as substrates. The sequence is that of DNA-directed RNA polymerase subunit Rpo10 from Sulfurisphaera tokodaii (strain DSM 16993 / JCM 10545 / NBRC 100140 / 7) (Sulfolobus tokodaii).